The chain runs to 98 residues: NADH-ubiquinone oxidoreductase chain 4L (98 aa).

3 consecutive transmembrane segments (helical) span residues 1 to 21 (MSLT…GLLL), 29 to 49 (SLLC…MTIL), and 61 to 81 (IILL…LVMV).

The protein belongs to the complex I subunit 4L family. Core subunit of respiratory chain NADH dehydrogenase (Complex I) which is composed of 45 different subunits.

The protein localises to the mitochondrion inner membrane. The enzyme catalyses a ubiquinone + NADH + 5 H(+)(in) = a ubiquinol + NAD(+) + 4 H(+)(out). Core subunit of the mitochondrial membrane respiratory chain NADH dehydrogenase (Complex I) which catalyzes electron transfer from NADH through the respiratory chain, using ubiquinone as an electron acceptor. Part of the enzyme membrane arm which is embedded in the lipid bilayer and involved in proton translocation. The protein is NADH-ubiquinone oxidoreductase chain 4L (MT-ND4L) of Vampyrodes caraccioli (Great stripe-faced bat).